Here is a 108-residue protein sequence, read N- to C-terminus: Replication restart protein PriB (108 aa).

The 98-residue stretch at 11 to 108 (INRNQVIISG…VLHVRDTRII (98 aa)) folds into the SSB domain.

It belongs to the PriB family. Homodimer. Interacts with PriA and DnaT. Component of the replication restart primosome. Primosome assembly occurs via a 'hand-off' mechanism. PriA binds to replication forks, subsequently PriB then DnaT bind; DnaT then displaces ssDNA to generate the helicase loading substrate.

In terms of biological role, involved in the restart of stalled replication forks, which reloads the replicative helicase on sites other than the origin of replication; the PriA-PriB pathway is the major replication restart pathway. During primosome assembly it facilitates complex formation between PriA and DnaT on DNA; stabilizes PriA on DNA. Stimulates the DNA unwinding activity of PriA helicase. This chain is Replication restart protein PriB, found in Nitrosomonas europaea (strain ATCC 19718 / CIP 103999 / KCTC 2705 / NBRC 14298).